The chain runs to 218 residues: Glutathione S-transferase class-mu 26 kDa isozyme (218 aa).

One can recognise a GST N-terminal domain in the interval 2–83 (SPILGYWKIK…YIADKHNMLG (82 aa)). Glutathione contacts are provided by residues 7–8 (YW), 41–45 (WRNKK), 54–55 (NL), and 67–68 (QS). Residues 85–203 (CPKERAEISM…KSSKYIAWPL (119 aa)) enclose the GST C-terminal domain. Position 111 (Tyr111) interacts with substrate.

It belongs to the GST superfamily. Mu family. Homodimer.

The enzyme catalyses RX + glutathione = an S-substituted glutathione + a halide anion + H(+). Its function is as follows. Conjugation of reduced glutathione to a wide number of exogenous and endogenous hydrophobic electrophiles. Functionally, GST isoenzymes appear to play a central role in the parasite detoxification system. Other functions are also suspected including a role in increasing the solubility of haematin in the parasite gut. This is Glutathione S-transferase class-mu 26 kDa isozyme from Schistosoma japonicum (Blood fluke).